A 117-amino-acid polypeptide reads, in one-letter code: ATP-dependent Clp protease adapter protein ClpS 1 (117 aa).

Positions 1–33 (MIAMPVRMQQGSEGDGGGPSRGTSVITRTKPKT) are disordered.

This sequence belongs to the ClpS family. Binds to the N-terminal domain of the chaperone ClpA.

Involved in the modulation of the specificity of the ClpAP-mediated ATP-dependent protein degradation. The sequence is that of ATP-dependent Clp protease adapter protein ClpS 1 from Rhizobium meliloti (strain 1021) (Ensifer meliloti).